We begin with the raw amino-acid sequence, 349 residues long: NADH-quinone oxidoreductase subunit H (349 aa).

The next 8 membrane-spanning stretches (helical) occupy residues 19–39, 88–108, 123–143, 161–181, 202–222, 249–269, 284–304, and 325–345; these read VWTLTKIVAIIAPLMLCVAYL, GLFILGPILAIAPSLAAWAVV, LLFLLAITSVEVYGVIIAGWA, VSYEVAMGFALICVLLISASL, FLSWNWIPLFPMFIVFLISGI, GMAFALFFLAEYANMILVSIL, FLPDGFFWLALKTAFFLFVFL, and VFIPITLVWVIVVAVWMMSPL.

It belongs to the complex I subunit 1 family. As to quaternary structure, NDH-1 is composed of 14 different subunits. Subunits NuoA, H, J, K, L, M, N constitute the membrane sector of the complex.

It is found in the cell inner membrane. It catalyses the reaction a quinone + NADH + 5 H(+)(in) = a quinol + NAD(+) + 4 H(+)(out). NDH-1 shuttles electrons from NADH, via FMN and iron-sulfur (Fe-S) centers, to quinones in the respiratory chain. The immediate electron acceptor for the enzyme in this species is believed to be ubiquinone. Couples the redox reaction to proton translocation (for every two electrons transferred, four hydrogen ions are translocated across the cytoplasmic membrane), and thus conserves the redox energy in a proton gradient. This subunit may bind ubiquinone. This chain is NADH-quinone oxidoreductase subunit H, found in Aromatoleum aromaticum (strain DSM 19018 / LMG 30748 / EbN1) (Azoarcus sp. (strain EbN1)).